A 204-amino-acid chain; its full sequence is Tat proofreading chaperone DmsD (204 aa).

This sequence belongs to the TorD/DmsD family. DmsD subfamily.

Functionally, required for biogenesis/assembly of DMSO reductase, but not for the interaction of the DmsA signal peptide with the Tat system. May be part of a chaperone cascade complex that facilitates a folding-maturation pathway for the substrate protein. The protein is Tat proofreading chaperone DmsD of Salmonella paratyphi A (strain ATCC 9150 / SARB42).